A 509-amino-acid chain; its full sequence is DNA nucleotidylexotransferase (509 aa).

Positions 1-25 are disordered; the sequence is MDPLCTASSGPRKKRPRQVGASMAS. The Nuclear localization signal motif lies at 11–17; it reads PRKKRPR. The 98-residue stretch at 27 to 124 folds into the BRCT domain; the sequence is PHDIKFQNLV…KPVEITGKHQ (98 aa). The mediates interaction with DNTTIP2 stretch occupies residues 151-509; the sequence is SQYACQRKTT…DYIEPWERNA (359 aa). Residues 258-262 form an involved in DNA binding region; it reads VGLKT. A 2'-deoxyribonucleoside 5'-triphosphate contacts are provided by residues 333-338 and 342-345; these read GFRRGK and HDVD. Mg(2+)-binding residues include D343, D345, and D433. 448–449 serves as a coordination point for a 2'-deoxyribonucleoside 5'-triphosphate; it reads GW.

Belongs to the DNA polymerase type-X family. Interacts with PRP19 and DNTTIP1. Forms a ternary complex with DNTTIP2 and core histone. Released from this complex by PCNA. Interacts with TRERF1. It depends on Mg(2+) as a cofactor.

It is found in the nucleus. It catalyses the reaction DNA(n) + a 2'-deoxyribonucleoside 5'-triphosphate = DNA(n+1) + diphosphate. Its function is as follows. Template-independent DNA polymerase which catalyzes the random addition of deoxynucleoside 5'-triphosphate to the 3'-end of a DNA initiator. One of the in vivo functions of this enzyme is the addition of nucleotides at the junction (N region) of rearranged Ig heavy chain and T-cell receptor gene segments during the maturation of B- and T-cells. In Bos taurus (Bovine), this protein is DNA nucleotidylexotransferase (DNTT).